Here is a 956-residue protein sequence, read N- to C-terminus: Thrombospondin-3 (956 aa).

Positions 1 to 22 are cleaved as a signal peptide; it reads METQELRGALALLLLCFFTSAS. The Laminin G-like domain occupies 23–193; the sequence is QDLQVIDLLT…VESMKIILGG (171 aa). 21 disulfide bridges follow: Cys278–Cys289, Cys283–Cys300, Cys303–Cys314, Cys320–Cys332, Cys326–Cys341, Cys344–Cys368, Cys374–Cys388, Cys382–Cys397, Cys400–Cys412, Cys418–Cys432, Cys426–Cys442, Cys444–Cys455, Cys471–Cys478, Cys483–Cys503, Cys519–Cys539, Cys542–Cys562, Cys578–Cys598, Cys601–Cys621, Cys639–Cys659, Cys679–Cys699, and Cys715–Cys936. Asn310 carries N-linked (GlcNAc...) asparagine glycosylation. The EGF-like 1; calcium-binding domain maps to 316 to 354; the sequence is DINECAHADPCFPGSSCINTMPGFHCEACPRGYKGTQVS. The EGF-like 2; calcium-binding domain occupies 370–410; sequence DIDECNDGNNGGCDPNSICTNTVGSFKCGPCRLGFLGNQSQ. Residue Asn407 is glycosylated (N-linked (GlcNAc...) asparagine). The 43-residue stretch at 414–456 folds into the EGF-like 3 domain; that stretch reads PARTCHSPAHSPCHIHAHCLFERNGAVSCQCNVGWAGNGNVCG. TSP type-3 repeat units lie at residues 457–491, 492–527, 528–550, 551–586, 587–609, 610–647, 648–687, and 688–723; these read TDTDIDGYPDQALPCMDNNKHCKQDNCLLTPNSGQ, EDADNDGVGDQCDDDADGDGIKNVEDNCRLFPNKDQ, QNSDTDSFGDACDNCPNVPNNDQ, KDTDGNGEGDACDNDVDGDGIPNGLDNCPKVPNPLQ, TDRDEDGVGDACDSCPEMSNPTQ, TDADSDLVGDVCDTNEDSDGDGHQDTKDNCPQLPNSSQ, LDSDNDGLGDECDGDDDNDGIPDYVPPGPDNCRLVPNPNQ, and KDSDGNGVGDVCEDDFDNDAVVDPLDVCPESAEVTL. 2 disordered regions span residues 518-537 and 546-702; these read NCRLFPNKDQQNSDTDSFGD and PNND…CEDD. A compositionally biased stretch (acidic residues) spans 555-568; sequence GNGEGDACDNDVDG. The span at 612–628 shows a compositional bias: acidic residues; sequence ADSDLVGDVCDTNEDSD. Asn644 is a glycosylation site (N-linked (GlcNAc...) asparagine). Acidic residues predominate over residues 650-667; it reads SDNDGLGDECDGDDDNDG. In terms of domain architecture, TSP C-terminal spans 727–941; that stretch reads RAYQTVVLDP…LQYRCNDTVP (215 aa). N-linked (GlcNAc...) asparagine glycosylation occurs at Asn937.

The protein belongs to the thrombospondin family. In terms of assembly, oligomer; disulfide-linked.

Its function is as follows. Adhesive glycoprotein that mediates cell-to-cell and cell-to-matrix interactions. Can bind to fibrinogen, fibronectin, laminin and type V collagen. The sequence is that of Thrombospondin-3 (THBS3) from Homo sapiens (Human).